A 257-amino-acid polypeptide reads, in one-letter code: Pimeloyl-[acyl-carrier protein] methyl ester esterase (257 aa).

Positions 16–240 constitute an AB hydrolase-1 domain; it reads LVLIHGWGMN…EQASHAPFIS (225 aa). Substrate is bound by residues Trp22, 82–83, and 143–147; these read SL and FMALQ. Ser82 acts as the Nucleophile in catalysis. Residues Asp207 and His235 contribute to the active site. Position 235 (His235) interacts with substrate.

Belongs to the AB hydrolase superfamily. Carboxylesterase BioH family. As to quaternary structure, monomer.

It localises to the cytoplasm. It carries out the reaction 6-carboxyhexanoyl-[ACP] methyl ester + H2O = 6-carboxyhexanoyl-[ACP] + methanol + H(+). The protein operates within cofactor biosynthesis; biotin biosynthesis. In terms of biological role, the physiological role of BioH is to remove the methyl group introduced by BioC when the pimeloyl moiety is complete. It allows to synthesize pimeloyl-ACP via the fatty acid synthetic pathway through the hydrolysis of the ester bonds of pimeloyl-ACP esters. This chain is Pimeloyl-[acyl-carrier protein] methyl ester esterase, found in Aliivibrio fischeri (strain ATCC 700601 / ES114) (Vibrio fischeri).